We begin with the raw amino-acid sequence, 338 residues long: Ketol-acid reductoisomerase (NADP(+)) (338 aa).

A KARI N-terminal Rossmann domain is found at 1 to 181 (MNVFYDKDAD…GGGRAGIIET (181 aa)). Residues 24-27 (YGSQ), arginine 47, and serine 52 contribute to the NADP(+) site. The active site involves histidine 107. An NADP(+)-binding site is contributed by glycine 133. The region spanning 182-327 (NFREETETDL…AKLRAMMPWI (146 aa)) is the KARI C-terminal knotted domain. Positions 190, 194, 226, and 230 each coordinate Mg(2+). Serine 251 contacts substrate.

Belongs to the ketol-acid reductoisomerase family. It depends on Mg(2+) as a cofactor.

It carries out the reaction (2R)-2,3-dihydroxy-3-methylbutanoate + NADP(+) = (2S)-2-acetolactate + NADPH + H(+). The enzyme catalyses (2R,3R)-2,3-dihydroxy-3-methylpentanoate + NADP(+) = (S)-2-ethyl-2-hydroxy-3-oxobutanoate + NADPH + H(+). It participates in amino-acid biosynthesis; L-isoleucine biosynthesis; L-isoleucine from 2-oxobutanoate: step 2/4. Its pathway is amino-acid biosynthesis; L-valine biosynthesis; L-valine from pyruvate: step 2/4. In terms of biological role, involved in the biosynthesis of branched-chain amino acids (BCAA). Catalyzes an alkyl-migration followed by a ketol-acid reduction of (S)-2-acetolactate (S2AL) to yield (R)-2,3-dihydroxy-isovalerate. In the isomerase reaction, S2AL is rearranged via a Mg-dependent methyl migration to produce 3-hydroxy-3-methyl-2-ketobutyrate (HMKB). In the reductase reaction, this 2-ketoacid undergoes a metal-dependent reduction by NADPH to yield (R)-2,3-dihydroxy-isovalerate. This is Ketol-acid reductoisomerase (NADP(+)) from Burkholderia ambifaria (strain MC40-6).